The primary structure comprises 853 residues: MICAL-like protein 1 (853 aa).

A Calponin-homology (CH) domain is found at A2–A108. Disordered regions lie at residues P118–S162 and S224–I659. Positions E145–S162 are enriched in polar residues. In terms of domain architecture, LIM zinc-binding spans S162–S224. S292 and S306 each carry phosphoserine. Phosphothreonine is present on residues T312 and T315. Positions L355–P366 are enriched in basic and acidic residues. Over residues A381 to G394 the composition is skewed to pro residues. A Phosphoserine modification is found at S388. Residues N419–F421 carry the NPF1 motif. A compositionally biased stretch (pro residues) spans P429–S445. A phosphothreonine mark is found at T457 and T459. 4 positions are modified to phosphoserine: S460, S461, S474, and S476. 2 stretches are compositionally biased toward low complexity: residues P495–E515 and S541–S553. Residues S568 and S611 each carry the phosphoserine modification. Over residues P607–S618 the composition is skewed to polar residues. Positions N623–F625 match the NPF2 motif. The segment at K642–S853 is mediates the interaction with RAB13 and RAB35 and intramolecular interaction with the CH domain. Positions R661–A808 constitute a bMERB domain. Positions E671–G701 form a coiled coil. The tract at residues H690–S853 is necessary and sufficient to associate with tubular recycling endosome membranes, mediate phosphatidic acid-binding and membrane tubulation. The residue at position 730 (S730) is a Phosphoserine. Residues C791 to E820 adopt a coiled-coil conformation.

Homooligomer. Interacts (via NPF1 motif) with EHD1 (via EH domain); the interaction is direct and probably recruits EHD1 to membranes. Interacts with EHD3 (via EH domain). Interacts with RAB35 (GTP-bound form); the interaction is direct and probably recruits MICALL1 to membranes. Interacts with ACAP2; the interaction is indirect through RAB35. Interacts with RAB8A (GTP-bound form); regulates RAB8A association with recycling endosomes. Interacts with RAB13 (GTP-bound form). Interacts with ARF6 (GTP-bound form). Interacts with PACSIN2 (via the SH3 domain). Interacts with DPYSL2.

The protein localises to the recycling endosome membrane. Its subcellular location is the late endosome membrane. It localises to the cell projection. It is found in the cilium membrane. The protein resides in the cytoplasm. The protein localises to the cytoskeleton. Its subcellular location is the microtubule organizing center. It localises to the centrosome. It is found in the centriole. Lipid-binding protein with higher affinity for phosphatidic acid, a lipid enriched in recycling endosome membranes. On endosome membranes, acts as a downstream effector of Rab proteins recruiting cytosolic proteins to regulate membrane tubulation. Involved in a late step of receptor-mediated endocytosis regulating for instance endocytosed-EGF receptor trafficking. Alternatively, regulates slow endocytic recycling of endocytosed proteins back to the plasma membrane. Also involved in cargo protein delivery to the plasma membrane. Plays a role in ciliogenesis coordination, recruits EHD1 to primary cilium where it is anchored to the centriole through interaction with tubulins. May indirectly play a role in neurite outgrowth. The chain is MICAL-like protein 1 (MICALL1) from Bos taurus (Bovine).